A 187-amino-acid polypeptide reads, in one-letter code: Large ribosomal subunit protein uL5 (187 aa).

The protein belongs to the universal ribosomal protein uL5 family. Part of the 50S ribosomal subunit; part of the 5S rRNA/L5/L18/L25 subcomplex. Contacts the 5S rRNA and the P site tRNA. Forms a bridge to the 30S subunit in the 70S ribosome.

This is one of the proteins that bind and probably mediate the attachment of the 5S RNA into the large ribosomal subunit, where it forms part of the central protuberance. In the 70S ribosome it contacts protein S13 of the 30S subunit (bridge B1b), connecting the 2 subunits; this bridge is implicated in subunit movement. Contacts the P site tRNA; the 5S rRNA and some of its associated proteins might help stabilize positioning of ribosome-bound tRNAs. The protein is Large ribosomal subunit protein uL5 of Ruegeria sp. (strain TM1040) (Silicibacter sp.).